The chain runs to 584 residues: Transcriptional regulator STP2 (584 aa).

Composition is skewed to polar residues over residues 1 to 11 and 180 to 202; these read MSVAITSNNNK and AESN…SISD. Disordered stretches follow at residues 1–22 and 161–214; these read MSVA…PHLK and KMHP…STVS. Low complexity predominate over residues 203–214; sequence SPSHSETESTVS. The C2H2-type zinc finger occupies 225–247; it reads FKCPSCDAEFRVRGYLTRHMKKH. 2 disordered regions span residues 381-496 and 553-584; these read RQKK…PQQP and QYQP…SMYF. The segment covering 394-407 has biased composition (low complexity); that stretch reads SESSIQSQESESSI. Basic residues predominate over residues 431–441; it reads QHQHQHHHHVQ. A compositionally biased stretch (low complexity) spans 442–480; that stretch reads NQHQQHVNQQQSIATPASIYSSSASSTSSYESTHSPYTP. Polar residues predominate over residues 481 to 496; the sequence is QSSRSPLSHMYNPQQP.

In terms of processing, proteolytically cleaved: activated by the amino acid-induced proteolytic removal of an N-terminal inhibitory domain.

It localises to the cell membrane. The protein localises to the nucleus. Functionally, transcription factor involved in the regulation of gene expression in response to extracellular amino acid levels. Synthesized as latent cytoplasmic precursor, which, upon a signal initiated by the plasma membrane SPS amino acid sensor system (including CSY1 and CSH3), becomes proteolytically activated and relocates to the nucleus, where it induces the expression of SPS-sensor-regulated genes. Required for efficient alkalinization through the release of ammonia from the cells produced during the breakdown of amino acids, and subsequent switch to the hyphal form. This chain is Transcriptional regulator STP2 (STP2), found in Candida albicans (strain SC5314 / ATCC MYA-2876) (Yeast).